Here is a 463-residue protein sequence, read N- to C-terminus: ATP-dependent protease ATPase subunit HslU (463 aa).

Residues Ile-19, 61–66 (GVGKTE), Asp-277, Glu-341, and Arg-413 each bind ATP.

This sequence belongs to the ClpX chaperone family. HslU subfamily. In terms of assembly, a double ring-shaped homohexamer of HslV is capped on each side by a ring-shaped HslU homohexamer. The assembly of the HslU/HslV complex is dependent on binding of ATP.

Its subcellular location is the cytoplasm. Functionally, ATPase subunit of a proteasome-like degradation complex; this subunit has chaperone activity. The binding of ATP and its subsequent hydrolysis by HslU are essential for unfolding of protein substrates subsequently hydrolyzed by HslV. HslU recognizes the N-terminal part of its protein substrates and unfolds these before they are guided to HslV for hydrolysis. In Bacillus cereus (strain 03BB102), this protein is ATP-dependent protease ATPase subunit HslU.